The sequence spans 454 residues: Exopolyphosphatase PRUNE1 (454 aa).

Met-1 is modified (N-acetylmethionine). Mn(2+) contacts are provided by Asp-28, Asp-30, Asp-106, and Asp-179. Residues 106–108 (DHH) carry the DHH motif motif. Positions 394-421 (SLIAGLSQDDEDPPLPPTPMNSLVDECP) are essential for homodimerization. The tract at residues 398-421 (GLSQDDEDPPLPPTPMNSLVDECP) is disordered. Ser-400 carries the phosphoserine modification. Thr-411 bears the Phosphothreonine mark. Phosphoserine is present on Ser-415.

Belongs to the PPase class C family. Prune subfamily. In terms of assembly, homooligomer. Able to homodimerize via its C-terminal domain. Interacts with NME1. Interacts with GSK3; at focal adhesion complexes where paxillin and vinculin are colocalized. Interacts with alpha and beta tubulin. Requires Mn(2+) as cofactor.

The protein resides in the cytoplasm. It is found in the nucleus. It localises to the cell junction. Its subcellular location is the focal adhesion. The enzyme catalyses diphosphate + H2O = 2 phosphate + H(+). Its activity is regulated as follows. Activated by magnesium ions and inhibited by manganese ions. Inhibited by dipyridamole, moderately sensitive to IBMX and inhibited by vinpocetine. Phosphodiesterase (PDE) that has higher activity toward cAMP than cGMP, as substrate. Plays a role in cell proliferation, migration and differentiation, and acts as a negative regulator of NME1. Plays a role in the regulation of neurogenesis. Involved in the regulation of microtubule polymerization. The protein is Exopolyphosphatase PRUNE1 (Prune1) of Rattus norvegicus (Rat).